The primary structure comprises 352 residues: Large ribosomal subunit protein uL10 (352 aa).

Residues aspartate 286 to aspartate 297 are compositionally biased toward acidic residues. The tract at residues aspartate 286–glycine 352 is disordered. The span at aspartate 299–aspartate 310 shows a compositional bias: low complexity. The span at glutamate 324–glycine 340 shows a compositional bias: acidic residues. The span at glycine 343–glycine 352 shows a compositional bias: gly residues.

The protein belongs to the universal ribosomal protein uL10 family. In terms of assembly, part of the 50S ribosomal subunit. Forms part of the ribosomal stalk which helps the ribosome interact with GTP-bound translation factors. Forms a heptameric L10(L12)2(L12)2(L12)2 complex, where L10 forms an elongated spine to which the L12 dimers bind in a sequential fashion.

In terms of biological role, forms part of the ribosomal stalk, playing a central role in the interaction of the ribosome with GTP-bound translation factors. In Halobacterium salinarum (strain ATCC 700922 / JCM 11081 / NRC-1) (Halobacterium halobium), this protein is Large ribosomal subunit protein uL10.